The chain runs to 79 residues: Cytochrome b (79 aa).

The next 3 helical transmembrane spans lie at 1–7 (TALLLAA), 31–52 (WLIR…YLHI), and 67–79 (WNIG…TLMA). Heme b contacts are provided by H37 and H51.

It belongs to the cytochrome b family. The cytochrome bc1 complex contains 11 subunits: 3 respiratory subunits (MT-CYB, CYC1 and UQCRFS1), 2 core proteins (UQCRC1 and UQCRC2) and 6 low-molecular weight proteins (UQCRH/QCR6, UQCRB/QCR7, UQCRQ/QCR8, UQCR10/QCR9, UQCR11/QCR10 and a cleavage product of UQCRFS1). This cytochrome bc1 complex then forms a dimer. The cofactor is heme b.

Its subcellular location is the mitochondrion inner membrane. Component of the ubiquinol-cytochrome c reductase complex (complex III or cytochrome b-c1 complex) that is part of the mitochondrial respiratory chain. The b-c1 complex mediates electron transfer from ubiquinol to cytochrome c. Contributes to the generation of a proton gradient across the mitochondrial membrane that is then used for ATP synthesis. In Pomatostomus superciliosus (White-browed babbler), this protein is Cytochrome b (MT-CYB).